The following is a 235-amino-acid chain: NADH-quinone oxidoreductase subunit C (235 aa).

This sequence belongs to the complex I 30 kDa subunit family. NDH-1 is composed of 14 different subunits. Subunits NuoB, C, D, E, F, and G constitute the peripheral sector of the complex.

Its subcellular location is the cell membrane. It catalyses the reaction a quinone + NADH + 5 H(+)(in) = a quinol + NAD(+) + 4 H(+)(out). In terms of biological role, NDH-1 shuttles electrons from NADH, via FMN and iron-sulfur (Fe-S) centers, to quinones in the respiratory chain. The immediate electron acceptor for the enzyme in this species is believed to be a menaquinone. Couples the redox reaction to proton translocation (for every two electrons transferred, four hydrogen ions are translocated across the cytoplasmic membrane), and thus conserves the redox energy in a proton gradient. The protein is NADH-quinone oxidoreductase subunit C of Mycobacterium avium (strain 104).